We begin with the raw amino-acid sequence, 462 residues long: Argininosuccinate lyase (462 aa).

Belongs to the lyase 1 family. Argininosuccinate lyase subfamily.

It is found in the cytoplasm. The catalysed reaction is 2-(N(omega)-L-arginino)succinate = fumarate + L-arginine. It functions in the pathway amino-acid biosynthesis; L-arginine biosynthesis; L-arginine from L-ornithine and carbamoyl phosphate: step 3/3. This is Argininosuccinate lyase from Gloeothece citriformis (strain PCC 7424) (Cyanothece sp. (strain PCC 7424)).